The sequence spans 502 residues: Lysine--tRNA ligase (502 aa).

Mg(2+) contacts are provided by Glu413 and Glu420.

Belongs to the class-II aminoacyl-tRNA synthetase family. As to quaternary structure, homodimer. It depends on Mg(2+) as a cofactor.

The protein resides in the cytoplasm. The catalysed reaction is tRNA(Lys) + L-lysine + ATP = L-lysyl-tRNA(Lys) + AMP + diphosphate. This chain is Lysine--tRNA ligase (lysS), found in Haemophilus influenzae (strain ATCC 51907 / DSM 11121 / KW20 / Rd).